Reading from the N-terminus, the 192-residue chain is UPF0301 protein Jann_3896 (192 aa).

It belongs to the UPF0301 (AlgH) family.

In Jannaschia sp. (strain CCS1), this protein is UPF0301 protein Jann_3896.